The primary structure comprises 713 residues: Ribosomal RNA large subunit methyltransferase K/L (713 aa).

One can recognise a THUMP domain in the interval 43 to 154 (LAYRITLWTR…NGVITIAMNF (112 aa)).

The protein belongs to the methyltransferase superfamily. RlmKL family.

It localises to the cytoplasm. It carries out the reaction guanosine(2445) in 23S rRNA + S-adenosyl-L-methionine = N(2)-methylguanosine(2445) in 23S rRNA + S-adenosyl-L-homocysteine + H(+). It catalyses the reaction guanosine(2069) in 23S rRNA + S-adenosyl-L-methionine = N(2)-methylguanosine(2069) in 23S rRNA + S-adenosyl-L-homocysteine + H(+). In terms of biological role, specifically methylates the guanine in position 2445 (m2G2445) and the guanine in position 2069 (m7G2069) of 23S rRNA. The sequence is that of Ribosomal RNA large subunit methyltransferase K/L from Shewanella sp. (strain MR-4).